Here is a 213-residue protein sequence, read N- to C-terminus: Amelogenin, X isoform (213 aa).

An N-terminal signal peptide occupies residues 1–16 (MGTWILFACLLGAAFS). Residue serine 32 is modified to Phosphoserine. Low complexity-rich tracts occupy residues 96 to 105 (VPQQPMMPVP) and 114 to 160 (QHHQ…QPLQ). The interval 96–213 (VPQQPMMPVP…TDKTKREEVD (118 aa)) is disordered. The segment covering 161–194 (PLQPQPPVHPIQPLPPQPPLPPIFPMQPLPPMLP) has biased composition (pro residues).

Belongs to the amelogenin family. As to quaternary structure, interacts with KRT5. Phosphorylated by FAM20C in vitro.

It localises to the secreted. It is found in the extracellular space. The protein localises to the extracellular matrix. Plays a role in the biomineralization of teeth. Seems to regulate the formation of crystallites during the secretory stage of tooth enamel development. Thought to play a major role in the structural organization and mineralization of developing enamel. The polypeptide is Amelogenin, X isoform (AMELX) (Bos taurus (Bovine)).